Consider the following 217-residue polypeptide: MSIGILGKKLGMSQLFDEKGNSVPVTLIEAGPCRITQLKTTALDGYTAVQIGYGLSKDKHISKPEKGHLLKSGEELLKHLKEYRVEETSSYEIGNQITVKNFEVGQKVDISGKSMGRGFAGYQKRHGFSRGPMSHGSKNHRAPGSTGAGTTPGRIYPGKRMAGRYGGKQITTKGLLVLKIDDQKNLLVVKGSVPGKPGSIINIKPNNIVGKKGGEKS.

Positions 127–162 (GFSRGPMSHGSKNHRAPGSTGAGTTPGRIYPGKRMA) are disordered. Over residues 142-153 (APGSTGAGTTPG) the composition is skewed to low complexity.

This sequence belongs to the universal ribosomal protein uL3 family. As to quaternary structure, part of the 50S ribosomal subunit. Forms a cluster with proteins L14 and L19.

One of the primary rRNA binding proteins, it binds directly near the 3'-end of the 23S rRNA, where it nucleates assembly of the 50S subunit. The protein is Large ribosomal subunit protein uL3 of Prochlorococcus marinus (strain MIT 9301).